A 586-amino-acid polypeptide reads, in one-letter code: Malonate--CoA ligase ACSF3, mitochondrial (586 aa).

A mitochondrion-targeting transit peptide spans 1-89 (MPLPYVGMAL…SREICQLRAC (89 aa)). ATP-binding positions include 203-211 (TSGTTGRPK), aspartate 457, arginine 471, and lysine 563.

The protein belongs to the ATP-dependent AMP-binding enzyme family.

It localises to the mitochondrion. The catalysed reaction is tetracosanoate + ATP + CoA = tetracosanoyl-CoA + AMP + diphosphate. It catalyses the reaction malonate + ATP + CoA = malonyl-CoA + AMP + diphosphate. Catalyzes the initial reaction in intramitochondrial fatty acid synthesis, by activating malonate and methylmalonate, but not acetate, into their respective CoA thioester. May have some preference toward very-long-chain substrates. The chain is Malonate--CoA ligase ACSF3, mitochondrial from Bos taurus (Bovine).